A 121-amino-acid chain; its full sequence is Large ribosomal subunit protein uL3 (121 aa).

Gln-62 carries the post-translational modification N5-methylglutamine.

It belongs to the universal ribosomal protein uL3 family. Part of the 50S ribosomal subunit. Forms a cluster with proteins L14 and L19. In terms of processing, methylated by PrmB.

Its function is as follows. One of the primary rRNA binding proteins, it binds directly near the 3'-end of the 23S rRNA, where it nucleates assembly of the 50S subunit. The sequence is that of Large ribosomal subunit protein uL3 (rplC) from Aggregatibacter actinomycetemcomitans (Actinobacillus actinomycetemcomitans).